Here is a 105-residue protein sequence, read N- to C-terminus: DNA-directed RNA polymerase subunit omega (105 aa).

Belongs to the RNA polymerase subunit omega family. As to quaternary structure, the RNAP catalytic core consists of 2 alpha, 1 beta, 1 beta' and 1 omega subunit. When a sigma factor is associated with the core the holoenzyme is formed, which can initiate transcription.

It catalyses the reaction RNA(n) + a ribonucleoside 5'-triphosphate = RNA(n+1) + diphosphate. In terms of biological role, promotes RNA polymerase assembly. Latches the N- and C-terminal regions of the beta' subunit thereby facilitating its interaction with the beta and alpha subunits. The sequence is that of DNA-directed RNA polymerase subunit omega from Streptococcus pyogenes serotype M12 (strain MGAS2096).